The sequence spans 77 residues: ATP synthase subunit 9, mitochondrial (77 aa).

The next 2 helical transmembrane spans lie at 8–28 and 45–72; these read MGAG…GNVL and LFGY…LISF.

It belongs to the ATPase C chain family. In terms of assembly, F-type ATPases have 2 components, CF(1) - the catalytic core - and CF(0) - the membrane proton channel. CF(1) has five subunits: alpha(3), beta(3), gamma(1), delta(1), epsilon(1). CF(0) has three main subunits: a, b and c.

It localises to the mitochondrion membrane. This protein is one of the chains of the nonenzymatic membrane component (F0) of mitochondrial ATPase. The chain is ATP synthase subunit 9, mitochondrial (ATP9) from Petunia sp. (Petunia).